Here is a 92-residue protein sequence, read N- to C-terminus: UPF0223 protein SERP0684 (92 aa).

It belongs to the UPF0223 family.

The polypeptide is UPF0223 protein SERP0684 (Staphylococcus epidermidis (strain ATCC 35984 / DSM 28319 / BCRC 17069 / CCUG 31568 / BM 3577 / RP62A)).